We begin with the raw amino-acid sequence, 1267 residues long: RNA-directed RNA polymerase lambda-3 (1267 aa).

The region spanning 555–792 is the RdRp catalytic domain; that stretch reads LSTTSGSAVI…KLYFIFGCRI (238 aa).

The protein belongs to the reoviridae RNA-directed RNA polymerase family.

The protein resides in the virion. It carries out the reaction RNA(n) + a ribonucleoside 5'-triphosphate = RNA(n+1) + diphosphate. RNA-directed RNA polymerase that is involved in transcription and genome replication. Following infection, it catalyzes the synthesis of fully conservative plus strands. After core assembly, which consists in recruitment of one capped plus-strand for each genomic segments and polymerase complexes, the polymerase switches mode and catalyzes the synthesis of complementary minus-strands. The polypeptide is RNA-directed RNA polymerase lambda-3 (L1) (Mammalia (T1L)).